The primary structure comprises 354 residues: MDPNQRIARISAHLNPPNLHNQIADGSGLNRVACRAKGGSPGFKVAILGAAGGIGQPLAMLMKMNPLVSVLHLYDVANAPGVTADISHMDTSAVVRGFLGQPQLEEALTGMDLVIIPAGVPRKPGMTRDDLFNINAGIVRTLSEAIAKCCPKAIVNIISNPVNSTVPIAAEVFKKAGTFDPKKLMGVTMLDVVRANTFVAEVMSLDPREVEVPVVGGHAGVTILPLLSQVKPPCSFTQKEIEYLTDRIQNGGTEVVEAKAGAGSATLSMAYAAVEFADACLRGLRGDANIVECAYVASHVTELPFFASKVRLGRCGIDEVYGLGPLNEYERMGLEKAKKELSVSIHKGVTFAKK.

The segment at 6 to 14 (RIARISAHL) is peroxisomal targeting signal PTS2. NAD(+) is bound by residues 49–55 (GAAGGIG) and Asp75. Positions 122 and 128 each coordinate substrate. NAD(+)-binding positions include Asn135 and 158 to 160 (ISN). Residues Asn160 and Arg194 each coordinate substrate. His218 functions as the Proton acceptor in the catalytic mechanism. An NAD(+)-binding site is contributed by Met269.

Belongs to the LDH/MDH superfamily. MDH type 1 family. As to quaternary structure, homodimer. As to expression, expressed in rosette leaves at low levels.

It localises to the peroxisome. The catalysed reaction is (S)-malate + NAD(+) = oxaloacetate + NADH + H(+). Its function is as follows. Catalyzes a reversible NAD-dependent dehydrogenase reaction involved in central metabolism and redox homeostasis between organelle compartments. Peroxisomal NAD-dependent malate dehydrogenase involved in fatty acid beta-oxidation. Reoxidizes NADH from the beta-oxidation and provides NAD for the conversion of fatty acyl-CoA to acetyl-CoA. Does not participate directly in the glyoxylate cycle. Required for maintenance of photosynthetic rates under photorespiratory conditions, and carbon flow during photorespiration. Supplies NADH reductant to the peroxisomal hydroxypyruvate reductase (HPR), which reduces hydroxypyruvate into glycerate in the photorespiratory cycle. The polypeptide is Malate dehydrogenase 1, peroxisomal (Arabidopsis thaliana (Mouse-ear cress)).